The sequence spans 205 residues: Metal-independent carbonic anhydrase (205 aa).

The first 24 residues, 1–24 (MNLFKPRILVLFAATALISGIAIV), serve as a signal peptide directing secretion. Residues threonine 106 and tyrosine 124 each contribute to the hydrogencarbonate site.

The protein belongs to the iota-class carbonic anhydrase family. As to quaternary structure, homotetramer; dimer of dimers. Does not require a metal cofactor. is required as a cofactor.

It catalyses the reaction hydrogencarbonate + H(+) = CO2 + H2O. With respect to regulation, activity is not affected by EDTA or 2,6-pyridinedicarboxylic acid (PDA). Activity is not affected by addition of most divalent metal ions, except zinc ions which decrease the activity. Inhibited by the iodide ion. Functionally, catalyzes the hydration of carbon dioxide (CO2) to bicarbonate (HCO3(-)). Has only very low bicarbonate dehydration activity. May function even in metal-poor environments. This chain is Metal-independent carbonic anhydrase, found in Nostoc sp. (strain PCC 7120 / SAG 25.82 / UTEX 2576).